The following is a 603-amino-acid chain: Leucine-rich repeat-containing protein 40 (603 aa).

Residues 1-27 (MAAARRARAGDPRAGFRRAAEEQSPAV) are disordered. LRR repeat units lie at residues 83-104 (DLTK…VRLL), 106-127 (ALTV…LGQL), 129-150 (NLQK…LLQL), 152-173 (HLKG…FGQL), 175-196 (SLEE…FALL), 198-219 (NLVR…ISAM), 221-242 (SLRQ…LASM), 244-265 (SLEQ…PSCK), 266-286 (LLKE…ENLK), 290-311 (SLSV…ITLL), 313-335 (KLER…GNLS), 336-357 (QLKF…LLQK), 401-422 (TLKL…VFSA), 427-449 (PVTS…VELK), 451-473 (SVCD…CTLH), 474-495 (KLTH…MEAL), 497-518 (RLQV…LYRM), 520-541 (ALET…QLKK), 544-565 (QLGT…LGNC), and 567-588 (TLRT…ILAK).

The protein is Leucine-rich repeat-containing protein 40 (LRRC40) of Gallus gallus (Chicken).